A 627-amino-acid polypeptide reads, in one-letter code: MKYKRKLSLSVVFLFVFYLAAVTSDLESDRRALLAVRNSVRGRPLLWNMSASSPCNWHGVHCDAGRVTALRLPGSGLFGSLPIGGIGNLTQLKTLSLRFNSLSGPIPSDFSNLVLLRYLYLQGNAFSGEIPSLLFTLPSIIRINLGENKFSGRIPDNVNSATRLVTLYLERNQLSGPIPEITLPLQQFNVSSNQLNGSIPSSLSSWPRTAFEGNTLCGKPLDTCEAESPNGGDAGGPNTPPEKKDSDKLSAGAIVGIVIGCVVGLLLLLLILFCLCRKRKKEENVPSRNVEAPVAAATSSAAIPKETVVVVPPAKATGSESGAVNKDLTFFVKSFGEFDLDGLLKASAEVLGKGTVGSSYKASFEHGLVVAVKRLRDVVVPEKEFRERLHVLGSMSHANLVTLIAYYFSRDEKLLVFEYMSKGSLSAILHGNKGNGRTPLNWETRAGIALGAARAISYLHSRDGTTSHGNIKSSNILLSDSYEAKVSDYGLAPIISSTSAPNRIDGYRAPEITDARKISQKADVYSFGVLILELLTGKSPTHQQLNEEGVDLPRWVQSVTEQQTPSDVLDPELTRYQPEGNENIIRLLKIGMSCTAQFPDSRPSMAEVTRLIEEVSHSSGSPNPVSD.

A signal peptide spans 1–23; that stretch reads MKYKRKLSLSVVFLFVFYLAAVT. 5 LRR repeats span residues 91 to 112, 115 to 137, 139 to 161, 163 to 184, and 185 to 206; these read QLKTLSLRFNSLSGPIPSDFSN, LLRYLYLQGNAFSGEIPSLLFTL, SIIRINLGENKFSGRIPDNVNSA, RLVTLYLERNQLSGPIPEITLP, and LQQFNVSSNQLNGSIPSSLSSW. The interval 222–246 is disordered; it reads DTCEAESPNGGDAGGPNTPPEKKDS. Residues 253-273 traverse the membrane as a helical segment; sequence AIVGIVIGCVVGLLLLLLILF. Positions 345–620 constitute a Protein kinase domain; the sequence is KASAEVLGKG…LIEEVSHSSG (276 aa). Residue Ser347 is modified to Phosphoserine. Residues 351–359 and Lys373 contribute to the ATP site; that span reads LGKGTVGSS. The chain crosses the membrane as a helical span at residues 389–409; the sequence is LHVLGSMSHANLVTLIAYYFS. A Phosphoserine modification is found at Ser424. Thr444 carries the post-translational modification Phosphothreonine. Ser519 is subject to Phosphoserine. A Phosphothreonine modification is found at Thr595. Phosphoserine occurs at positions 621 and 626.

Belongs to the protein kinase superfamily. Ser/Thr protein kinase family.

It localises to the membrane. The chain is Probable inactive receptor kinase At3g02880 from Arabidopsis thaliana (Mouse-ear cress).